The primary structure comprises 403 residues: Synaptotagmin-7 (403 aa).

Over 1–16 (MYRDPEAASPGAPTRD) the chain is Vesicular. A helical transmembrane segment spans residues 17 to 37 (VLLVSAIITVSLSVTIVLCGL). Over 38 to 403 (CHWCQRKLGK…PVAQWHQLKA (366 aa)) the chain is Cytoplasmic. Position 52 is a phosphoserine (Ser52). A disordered region spans residues 53 to 103 (LETVGTPDSGRGRGEKKAIKLPAGGKAVNTAPVPGQTPHDESDRRTETRSS). Thr58 bears the Phosphothreonine mark. Residue Ser61 is modified to Phosphoserine. The segment covering 90–100 (PHDESDRRTET) has biased composition (basic and acidic residues). Phosphoserine occurs at positions 119 and 122. C2 domains follow at residues 135-255 (NLGR…TFWK) and 266-399 (SRGE…AQWH). Asp166 is a Ca(2+) binding site. An asymmetric dimethylarginine mark is found at Gly169 and Ser171. Residues Asp172, Asp225, Asp227, Ser230, Asp233, Asp297, Asp303, Asp357, Asp359, Ser362, and Asp365 each contribute to the Ca(2+) site.

It belongs to the synaptotagmin family. In terms of assembly, homodimer. Can also form heterodimers with SYT6, SYT9 and SYT10. Interacts with calmodulin (CALM1, CALM2 or CALM3). Interacts with CD63; required for localization to lysosomes. Interacts with APP. It depends on Ca(2+) as a cofactor. Post-translationally, palmitoylated at its vesicular N-terminus; palmitoylation is required for localization to lysosome and phagocytosis in macrophages. As to expression, widely expressed. Expressed in insulin-secreting cells. Present in glucagon-secreting cells (at protein level).

It localises to the cell membrane. The protein localises to the presynaptic cell membrane. The protein resides in the cytoplasmic vesicle. It is found in the secretory vesicle. Its subcellular location is the synaptic vesicle membrane. It localises to the lysosome membrane. The protein localises to the phagosome membrane. The protein resides in the peroxisome membrane. It is found in the secretory vesicle membrane. Ca(2+) sensor involved in Ca(2+)-dependent exocytosis of secretory and synaptic vesicles through Ca(2+) and phospholipid binding to the C2 domain. Ca(2+) induces binding of the C2-domains to phospholipid membranes and to assembled SNARE-complexes; both actions contribute to triggering exocytosis. SYT7 binds Ca(2+) with high affinity and slow kinetics compared to other synaptotagmins. Involved in Ca(2+)-triggered lysosomal exocytosis, a major component of the plasma membrane repair. Ca(2+)-regulated delivery of lysosomal membranes to the cell surface is also involved in the phagocytic uptake of particles by macrophages. Ca(2+)-triggered lysosomal exocytosis also plays a role in bone remodeling by regulating secretory pathways in osteoclasts and osteoblasts. Involved in cholesterol transport from lysosome to peroxisome by promoting membrane contacts between lysosomes and peroxisomes: probably acts by promoting vesicle fusion by binding phosphatidylinositol-4,5-bisphosphate on peroxisomal membranes. Acts as a key mediator of synaptic facilitation, a process also named short-term synaptic potentiation: synaptic facilitation takes place at synapses with a low initial release probability and is caused by influx of Ca(2+) into the axon terminal after spike generation, increasing the release probability of neurotransmitters. Probably mediates synaptic facilitation by directly increasing the probability of release. May also contribute to synaptic facilitation by regulating synaptic vesicle replenishment, a process required to ensure that synaptic vesicles are ready for the arrival of the next action potential: SYT7 is required for synaptic vesicle replenishment by acting as a sensor for Ca(2+) and by forming a complex with calmodulin. Also acts as a regulator of Ca(2+)-dependent insulin and glucagon secretion in beta-cells. Triggers exocytosis by promoting fusion pore opening and fusion pore expansion in chromaffin cells. Also regulates the secretion of some non-synaptic secretory granules of specialized cells. The chain is Synaptotagmin-7 from Mus musculus (Mouse).